We begin with the raw amino-acid sequence, 20 residues long: Antimicrobial peptide EP-20 (20 aa).

The disordered stretch occupies residues 1 to 20; it reads EGPVGLADPDGPASAPLGAP.

Its subcellular location is the secreted. The synthetic peptide inhibits growth of fungus P.capsici and partially that of V.dahliae, F.graminearum and F.omysporum. This is Antimicrobial peptide EP-20 from Xenorhabdus budapestensis.